The primary structure comprises 764 residues: Complement factor B (764 aa).

Positions 1–25 (MGSNLSPQLCLMPFILGLLSGGVTT) are cleaved as a signal peptide. Sushi domains are found at residues 35 to 100 (ESCS…ECRA), 101 to 160 (IHCP…ICDN), and 163 to 220 (GYCS…SCQD). 6 cysteine pairs are disulfide-bonded: Cys-37-Cys-76, Cys-62-Cys-98, Cys-103-Cys-145, Cys-131-Cys-158, Cys-165-Cys-205, and Cys-191-Cys-218. Asn-122 and Asn-142 each carry an N-linked (GlcNAc...) asparagine glycan. One can recognise a VWFA domain in the interval 270 to 469 (NIYLVLDGSD…NLEDVFYQMI (200 aa)). Residues Ser-278 and Ser-280 each coordinate Mg(2+). Asn-285 is a glycosylation site (N-linked (GlcNAc...) asparagine). Thr-353 provides a ligand contact to Mg(2+). A glycan (N-linked (GlcNAc...) asparagine) is linked at Asn-378. Residues 477–757 (LCGMVWEHRK…VLPWLKEKLQ (281 aa)) form the Peptidase S1 domain. 5 cysteine pairs are disulfide-bonded: Cys-478-Cys-596, Cys-511-Cys-527, Cys-599-Cys-615, Cys-656-Cys-682, and Cys-695-Cys-725. Active-site charge relay system residues include His-526 and Asp-576. Ser-699 serves as the catalytic Charge relay system.

This sequence belongs to the peptidase S1 family. Monomer. Interacts with complement C3b; this interaction is dependent on the presence of Mg(2+). As to quaternary structure, catalytic component of the C3 convertase of the alternative complement pathway, also named C3bBb, composed of complement factor B Bb and complement C3b. Catalytic component of the C5 convertase of the alternative complement pathway, also named C3bBb3b, composed of complement factor B Bb and additional molecules of complement C3b. Interacts to CFP; this interaction contributes to the stabilization of the active C3-convertase enzyme complex. Mg(2+) is required as a cofactor. It depends on Mn(2+) as a cofactor. Post-translationally, cleaved by CFD following activation of the alternative complement system, generating Ba and Bb chains. Cleavage and activation takes place when CFB is already associated with complement C3b.

The protein resides in the secreted. It is found in the cell surface. The enzyme catalyses Cleavage of Arg-|-Ser bond in complement component C3 alpha-chain to yield C3a and C3b, and Arg-|-Xaa bond in complement component C5 alpha-chain to yield C5a and C5b.. Its function is as follows. Precursor of the catalytic component of the C3 and C5 convertase complexes of the alternative pathway of the complement system, a cascade of proteins that leads to phagocytosis and breakdown of pathogens and signaling that strengthens the adaptive immune system. The alternative complement pathway acts as an amplification loop that enhances other complement pathways (classical, lectin and GZMK) by promoting formation of additional C3 and C5 convertases. CFB is cleaved and activated by CFD to generate Ba and Bb chains; Bb chain constituting the catalytic component of the C3 and C5 convertases. Serine protease component of the complement C3 and C5 convertase complexes of the alternative complement pathway. Following cleavage and activation by factor D (CFD), forms the C3 convertase together with complement C3b. As part of the C3 convertase, cleaves and activates C3 into C3a anaphylatoxin and C3b opsonin, the next components of the complement pathways. When an additional complement C3b molecule binds to the C3 convertase, forms the C5 convertase, which cleaves and activates C5 into C5a anaphylatoxin and C5b component of the membrane attack complex. Functionally, involved in proliferation and differentiation of preactivated B-lymphocytes, rapid spreading of peripheral blood monocytes, stimulation of lymphocyte blastogenesis and lysis of erythrocytes. In Pan troglodytes (Chimpanzee), this protein is Complement factor B (CFB).